The sequence spans 238 residues: MEKREKLYEGKAKIIYATDEPDKVIAYYKDSATAFDAIKKATIEGKGVLNNKIASFFFQLLNEKGIPTHFIKQISDREMLIYKVDIIPVEVVVRNIAAGSIVKRLGIPEKKEFDPPLVEFYLKNDELHDPIICEQHIYAMDLAKPEEVQKMKELALKVNDVLREFMREQGIILVDFKLEFGRKDGQIILADEISPDTCRFWDAKTGEKLDKDRFRFDLGDLIEGYTKILEKIQKKEGE.

The protein belongs to the SAICAR synthetase family.

It catalyses the reaction 5-amino-1-(5-phospho-D-ribosyl)imidazole-4-carboxylate + L-aspartate + ATP = (2S)-2-[5-amino-1-(5-phospho-beta-D-ribosyl)imidazole-4-carboxamido]succinate + ADP + phosphate + 2 H(+). The protein operates within purine metabolism; IMP biosynthesis via de novo pathway; 5-amino-1-(5-phospho-D-ribosyl)imidazole-4-carboxamide from 5-amino-1-(5-phospho-D-ribosyl)imidazole-4-carboxylate: step 1/2. In Persephonella marina (strain DSM 14350 / EX-H1), this protein is Phosphoribosylaminoimidazole-succinocarboxamide synthase.